The sequence spans 290 residues: 4-hydroxy-tetrahydrodipicolinate synthase (290 aa).

A pyruvate-binding site is contributed by T44. Y131 acts as the Proton donor/acceptor in catalysis. K159 acts as the Schiff-base intermediate with substrate in catalysis. I201 contacts pyruvate.

It belongs to the DapA family. As to quaternary structure, homotetramer; dimer of dimers.

The protein resides in the cytoplasm. The catalysed reaction is L-aspartate 4-semialdehyde + pyruvate = (2S,4S)-4-hydroxy-2,3,4,5-tetrahydrodipicolinate + H2O + H(+). Its pathway is amino-acid biosynthesis; L-lysine biosynthesis via DAP pathway; (S)-tetrahydrodipicolinate from L-aspartate: step 3/4. Catalyzes the condensation of (S)-aspartate-beta-semialdehyde [(S)-ASA] and pyruvate to 4-hydroxy-tetrahydrodipicolinate (HTPA). This chain is 4-hydroxy-tetrahydrodipicolinate synthase, found in Jannaschia sp. (strain CCS1).